Here is an 875-residue protein sequence, read N- to C-terminus: Aminopeptidase M1-B (875 aa).

Positions 96-203 (IGEGVLKMDF…MSTYLVAIVV (108 aa)) are required for membrane association. Residues glutamate 136 and 269-273 (GAMEN) each bind substrate. Residue histidine 305 coordinates Zn(2+). Glutamate 306 (proton acceptor) is an active-site residue. Residues histidine 309 and glutamate 328 each contribute to the Zn(2+) site. The Dileucine internalization motif signature appears at 722-723 (LL).

This sequence belongs to the peptidase M1 family. In terms of assembly, homodimer. Requires Zn(2+) as cofactor.

It is found in the membrane. It localises to the microsome membrane. The protein localises to the cytoplasm. The enzyme catalyses Release of an N-terminal amino acid, Xaa-|-Yaa- from a peptide, amide or arylamide. Xaa is preferably Ala, but may be most amino acids including Pro (slow action). When a terminal hydrophobic residue is followed by a prolyl residue, the two may be released as an intact Xaa-Pro dipeptide.. This chain is Aminopeptidase M1-B, found in Oryza sativa subsp. japonica (Rice).